The following is a 134-amino-acid chain: ATP synthase epsilon chain, chloroplastic (134 aa).

Belongs to the ATPase epsilon chain family. F-type ATPases have 2 components, CF(1) - the catalytic core - and CF(0) - the membrane proton channel. CF(1) has five subunits: alpha(3), beta(3), gamma(1), delta(1), epsilon(1). CF(0) has three main subunits: a, b and c.

Its subcellular location is the plastid. The protein localises to the chloroplast thylakoid membrane. Produces ATP from ADP in the presence of a proton gradient across the membrane. This is ATP synthase epsilon chain, chloroplastic from Liriodendron tulipifera (Tuliptree).